The sequence spans 202 residues: Thymidylate kinase (202 aa).

7–14 (GIDGSGKT) is a binding site for ATP.

The protein belongs to the thymidylate kinase family.

The catalysed reaction is dTMP + ATP = dTDP + ADP. In terms of biological role, phosphorylation of dTMP to form dTDP in both de novo and salvage pathways of dTTP synthesis. In Ehrlichia chaffeensis (strain ATCC CRL-10679 / Arkansas), this protein is Thymidylate kinase.